The chain runs to 213 residues: Ethylene-responsive transcription factor WIN1 (213 aa).

The segment at residues 15 to 72 is a DNA-binding region (AP2/ERF); sequence KFRGVRQRHWGSWVSEIRHPLLKRRVWLGTFETAEEAARAYDEAAVLMSGRNAKTNFP. A compositionally biased stretch (polar residues) spans 70-80; it reads NFPIQRSSTGE. Disordered stretches follow at residues 70–99 and 159–213; these read NFPIQRSSTGEPTPAAGRDARSNFSSGSST and ASTD…RFII. Over residues 159 to 174 the composition is skewed to low complexity; that stretch reads ASTDAASQSTSATTAP.

It belongs to the AP2/ERF transcription factor family. ERF subfamily. Mostly expressed in roots, stems and anthers, and, to a lower extent, in leaves, seeds and silks.

The protein localises to the nucleus. Its function is as follows. Promotes cuticle formation by inducing the expression of enzymes involved in wax biosynthesis, particularly promoting very-long-chain waxes formation. Confers drought resistance. Acts as a transcriptional activator binding directly to promoter regions of CER2, CER3.2 and KCS1, wax biosynthesis-related genes. Binds to the GCC-box pathogenesis-related promoter element. May be involved in the regulation of gene expression by stress factors and by components of stress signal transduction pathways. The protein is Ethylene-responsive transcription factor WIN1 of Zea mays (Maize).